The following is a 443-amino-acid chain: MSKTYHFIGIKGAGMSALALLLHQMGHKVQGSDVEKYYFTQRGLEQAGITILPFSEDNISPDMELIAGNAFREDNNSEVAYAMRHQLPFKRYHEFLGEFMKQFTSLGVAGAHGKTSTTGLLSHVLKHMTATSYLIGDGTGHGAADARYFVFESDEYERHFMPYHPEYSIITNIDFDHPDYFTGLDDVFNAFNDYAKQVKKALFVYGEDEELRKISSPAPIYYYGFEDTNDFVAFDITRTTNGSDFKVKHKGHAIGQFHVPAYGRHNILNATAVIANLFIAGFDMKLVAEHLKSFSGVKRRFTEKVINDTIIIDDFAHHPTEIIATLDAARQKYPNKEIIAIFQPHTFTRTIALLDDFAHALNEADSVYLAPIYGSAREVDKGDVKVEDLAARVERPAKVISVDNVSPLLDHDNAVYVFMGAGDIQLYERSFEELLANLTKNNQ.

Residue 110–116 (GAHGKTS) coordinates ATP.

It belongs to the MurCDEF family.

It localises to the cytoplasm. The enzyme catalyses UDP-N-acetyl-alpha-D-muramate + L-alanine + ATP = UDP-N-acetyl-alpha-D-muramoyl-L-alanine + ADP + phosphate + H(+). The protein operates within cell wall biogenesis; peptidoglycan biosynthesis. Cell wall formation. This chain is UDP-N-acetylmuramate--L-alanine ligase, found in Streptococcus equi subsp. zooepidemicus (strain MGCS10565).